The sequence spans 851 residues: DNA mismatch repair protein MutS (851 aa).

ATP is bound at residue 614–621 (GPNMGGKS).

Belongs to the DNA mismatch repair MutS family.

In terms of biological role, this protein is involved in the repair of mismatches in DNA. It is possible that it carries out the mismatch recognition step. This protein has a weak ATPase activity. The chain is DNA mismatch repair protein MutS from Serratia proteamaculans (strain 568).